The primary structure comprises 69 residues: uncharacterized protein (69 aa).

The chain crosses the membrane as a helical span at residues 32-54 (MLGAIDVAVAVASVPTLFVVTAI).

The protein localises to the membrane. This is an uncharacterized protein from Sinorhizobium fredii (strain NBRC 101917 / NGR234).